Here is a 40-residue protein sequence, read N- to C-terminus: Large ribosomal subunit protein bL36 (40 aa).

This sequence belongs to the bacterial ribosomal protein bL36 family.

This Corynebacterium urealyticum (strain ATCC 43042 / DSM 7109) protein is Large ribosomal subunit protein bL36.